The chain runs to 301 residues: D-alanine--D-alanine ligase (301 aa).

One can recognise an ATP-grasp domain in the interval 101 to 296 (KLMWRAAGLA…YPTLVRRVLE (196 aa)). 127–182 (EEELGLPLFVKPAREGSSIGVTKVKERGALKAAYEEAARHDPLVIAEKGVMGGEYT) is an ATP binding site. Mg(2+) is bound by residues D250, E263, and N265.

The protein belongs to the D-alanine--D-alanine ligase family. Mg(2+) serves as cofactor. Mn(2+) is required as a cofactor.

Its subcellular location is the cytoplasm. It catalyses the reaction 2 D-alanine + ATP = D-alanyl-D-alanine + ADP + phosphate + H(+). Its pathway is cell wall biogenesis; peptidoglycan biosynthesis. Functionally, cell wall formation. This is D-alanine--D-alanine ligase from Dechloromonas aromatica (strain RCB).